The sequence spans 340 residues: Alpha-1,3-galactosyltransferase 2 (340 aa).

The Cytoplasmic portion of the chain corresponds to 1-12 (MALKEGLRAWKR). The helical; Signal-anchor for type II membrane protein transmembrane segment at 13–32 (IFWRQILLTLGLLGLFLYGL) threads the bilayer. At 33 to 340 (PKFRHLEALI…APKGYRLLRN (308 aa)) the chain is on the lumenal side. 2 N-linked (GlcNAc...) asparagine glycosylation sites follow: Asn58 and Asn100. Mn(2+) is bound by residues Asp199 and Asp201.

It belongs to the glycosyltransferase 6 family. Requires Mn(2+) as cofactor. In terms of tissue distribution, expressed in thymus and monocyte derived dendritic cells.

It is found in the golgi apparatus. It localises to the golgi stack membrane. The catalysed reaction is a beta-D-galactosyl-(1-&gt;4)-N-acetyl-beta-D-glucosaminyl derivative + UDP-alpha-D-galactose = an alpha-D-galactosyl-(1-&gt;3)-beta-D-galactosyl-(1-&gt;4)-N-acetyl-beta-D-glucosaminyl derivative + UDP + H(+). It catalyses the reaction a beta-D-Gal-(1-&gt;4)-beta-D-Glc-(1&lt;-&gt;1)-Cer(d18:1(4E)) + UDP-alpha-D-galactose = an isogloboside iGb3Cer (d18:1(4E)) + UDP + H(+). The enzyme catalyses a globoside Gb3Cer + UDP-alpha-D-galactose = a globoside GalGb3Cer + UDP + H(+). Its function is as follows. Synthesizes the galactose-alpha(1,3)-galactose group on the glycosphingolipid isoglobotrihexosylceramide or isogloboside 3 (iGb3) by catalyzing the transfer of galactose from UDP-Galactose to its acceptor molecule Gal-beta-1,4-Glc-ceramide. Can also catalyze the addition of galactose to iGb3 itself to form polygalactose structures. In Homo sapiens (Human), this protein is Alpha-1,3-galactosyltransferase 2.